We begin with the raw amino-acid sequence, 394 residues long: Elongation factor Tu 1 (394 aa).

The 195-residue stretch at 10–204 (KPHVNVGTIG…YLDSYIPEPE (195 aa)) folds into the tr-type G domain. The segment at 19–26 (GHVDHGKT) is G1. Position 19–26 (19–26 (GHVDHGKT)) interacts with GTP. T26 serves as a coordination point for Mg(2+). Residues 60 to 64 (GITIN) form a G2 region. Positions 81-84 (DCPG) are G3. GTP-binding positions include 81–85 (DCPGH) and 136–139 (NKCD). Residues 136-139 (NKCD) are G4. A G5 region spans residues 174–176 (SAL).

This sequence belongs to the TRAFAC class translation factor GTPase superfamily. Classic translation factor GTPase family. EF-Tu/EF-1A subfamily. Monomer.

The protein resides in the cytoplasm. It catalyses the reaction GTP + H2O = GDP + phosphate + H(+). Its function is as follows. GTP hydrolase that promotes the GTP-dependent binding of aminoacyl-tRNA to the A-site of ribosomes during protein biosynthesis. This Yersinia enterocolitica serotype O:8 / biotype 1B (strain NCTC 13174 / 8081) protein is Elongation factor Tu 1.